Consider the following 400-residue polypeptide: Enoyl-[acyl-carrier-protein] reductase [NADH] 2 (400 aa).

Residues 48–53 (GASSGF), 75–76 (FE), 112–113 (DA), and 141–142 (LA) each bind NAD(+). Tyr-227 contributes to the substrate binding site. The active-site Proton donor is Tyr-237. NAD(+)-binding positions include Lys-246 and 275–277 (LVT).

This sequence belongs to the TER reductase family. Monomer.

It catalyses the reaction a 2,3-saturated acyl-[ACP] + NAD(+) = a (2E)-enoyl-[ACP] + NADH + H(+). Its pathway is lipid metabolism; fatty acid biosynthesis. In terms of biological role, involved in the final reduction of the elongation cycle of fatty acid synthesis (FAS II). Catalyzes the reduction of a carbon-carbon double bond in an enoyl moiety that is covalently linked to an acyl carrier protein (ACP). The chain is Enoyl-[acyl-carrier-protein] reductase [NADH] 2 from Photobacterium profundum (strain SS9).